We begin with the raw amino-acid sequence, 488 residues long: H2.0-like homeobox protein (488 aa).

2 disordered regions span residues 118 to 173 (AYHH…SSKD) and 331 to 488 (WRHS…LGCL). Composition is skewed to low complexity over residues 125–135 (QQQQQQQQPQQ) and 158–171 (PNPH…APSS). Residues 276–335 (RSWSRAVFSNLQRKGLEKRFEIQKYVTKPDRKQLAAMLGLTDAQVKVWFQNRRMKWRHSK) constitute a DNA-binding region (homeobox). Composition is skewed to basic and acidic residues over residues 334 to 349 (SKEA…EAGE) and 363 to 372 (DERSPSRSEG). Positions 373 to 383 (EAESESSDSES) are enriched in acidic residues. Residues 390 to 401 (DTERTEGSERSL) show a composition bias toward basic and acidic residues. Gly residues predominate over residues 422-432 (GSGGSSGGGGN). The segment covering 433 to 454 (SFSFSSASSLSSSSTSAGCASS) has biased composition (low complexity).

It belongs to the H2.0 homeobox family. Low level in normal B and T-cells, high level in activated lymphocytes and monocytes. Also found in thymus, tonsil, bone marrow, developing vessels, and fetal brain.

It localises to the nucleus. Functionally, transcription factor required for TBX21/T-bet-dependent maturation of Th1 cells as well as maintenance of Th1-specific gene expression. Involved in embryogenesis and hematopoiesis. In Homo sapiens (Human), this protein is H2.0-like homeobox protein (HLX).